The sequence spans 603 residues: Grainyhead-like protein 3 homolog (603 aa).

Residues 30–95 form a transcription activation region; sequence EAWKTYLENP…QGKKFYHSMD (66 aa). The Grh/CP2 DB domain occupies 226 to 461; the sequence is GLKSDFEYTL…DLETQPVLFI (236 aa).

Belongs to the grh/CP2 family. Grainyhead subfamily. Homodimer, also forms heterodimers with GRHL1 and GRHL2. Interacts with LMO4.

It localises to the nucleus. In terms of biological role, transcription factor playing important roles in primary neurulation and in the differentiation of stratified epithelia of both ectodermal and endodermal origin. Binds directly to the consensus DNA sequence 5'-AACCGGTT-3' acting as an activator and repressor on distinct target genes. Essential for epidermal differentiation and barrier formation at the end of embryogenesis with TGM3 as critical direct target. Exhibits functional redundancy with GRHL2 in epidermal morphogenetic events such as eyelid fusion and epidermal wound repair. Despite being dispensable during normal epidermal homeostasis in the adulthood, is again required for barrier repair after immune-mediated epidermal damage, regulates distinct gene batteries in embryonic epidermal differentiation and adult epidermal barrier reformation after injury. Plays unique and cooperative roles with GRHL2 in establishing distinct zones of primary neurulation. Essential for spinal closure, functions cooperatively with GRHL2 in closure 2 (forebrain/midbrain boundary) and posterior neuropore closure. Also required for proper development of the oral periderm. No genetic interaction with GRHL1, no functional cooperativity due to diverse target gene selectivity. This is Grainyhead-like protein 3 homolog from Mus musculus (Mouse).